The following is a 150-amino-acid chain: UPF0201 protein APE_1751 (150 aa).

The protein belongs to the UPF0201 family.

The sequence is that of UPF0201 protein APE_1751 from Aeropyrum pernix (strain ATCC 700893 / DSM 11879 / JCM 9820 / NBRC 100138 / K1).